Here is a 334-residue protein sequence, read N- to C-terminus: Ferrochelatase (334 aa).

2 residues coordinate Fe cation: H207 and E288.

This sequence belongs to the ferrochelatase family.

It is found in the cytoplasm. It carries out the reaction heme b + 2 H(+) = protoporphyrin IX + Fe(2+). The protein operates within porphyrin-containing compound metabolism; protoheme biosynthesis; protoheme from protoporphyrin-IX: step 1/1. Functionally, catalyzes the ferrous insertion into protoporphyrin IX. The protein is Ferrochelatase of Helicobacter pylori (strain ATCC 700392 / 26695) (Campylobacter pylori).